The chain runs to 563 residues: Tripeptidyl-peptidase 1 (563 aa).

The signal sequence occupies residues 1–19 (MGLQACLLGLFALILSGKC). Residues 20-195 (SYSPEPDQRR…PEPQVTGTVG (176 aa)) constitute a propeptide, removed in mature form. A disulfide bridge connects residues Cys-111 and Cys-122. Residues 199-563 (GVTPSVIRKR…PALLKTLLNP (365 aa)) form the Peptidase S53 domain. 2 N-linked (GlcNAc...) asparagine glycosylation sites follow: Asn-210 and Asn-222. Active-site charge relay system residues include Glu-272 and Asp-276. N-linked (GlcNAc...) asparagine glycans are attached at residues Asn-286, Asn-313, and Asn-443. 2 disulfide bridges follow: Cys-365–Cys-526 and Cys-522–Cys-537. Ser-475 acts as the Charge relay system in catalysis. Asp-517 and Val-518 together coordinate Ca(2+). Ca(2+) contacts are provided by Gly-539, Gly-541, and Asp-543.

Monomer. Interacts with CLN5. Interacts with CLN3. Ca(2+) is required as a cofactor. In terms of processing, activated by autocatalytic proteolytical processing upon acidification. N-glycosylation is required for processing and activity.

Its subcellular location is the lysosome. It localises to the melanosome. It carries out the reaction Release of an N-terminal tripeptide from a polypeptide, but also has endopeptidase activity.. Lysosomal serine protease with tripeptidyl-peptidase I activity. May act as a non-specific lysosomal peptidase which generates tripeptides from the breakdown products produced by lysosomal proteinases. Requires substrates with an unsubstituted N-terminus. In Pan troglodytes (Chimpanzee), this protein is Tripeptidyl-peptidase 1 (TPP1).